Here is an 83-residue protein sequence, read N- to C-terminus: Mu-theraphotoxin-Hhn2b 3 (83 aa).

The first 21 residues, 1-21 (MKASMFLALAGLVLLFVVCYA), serve as a signal peptide directing secretion. The propeptide occupies 22–48 (SESEEKEFPRELISKIFAVDDFKGEVR). 3 cysteine pairs are disulfide-bonded: Cys50-Cys65, Cys57-Cys70, and Cys64-Cys77. At Leu81 the chain carries Leucine amide.

This sequence belongs to the neurotoxin 10 (Hwtx-1) family. 14 (Hntx-1) subfamily. In terms of assembly, monomer. In terms of tissue distribution, expressed by the venom gland.

It is found in the secreted. Weakly blocks the rat SCN2A/SCN1B (Nav1.2/beta-1) sodium channel (IC(50)=68 uM) and the insect sodium channel para/tipE (IC(50)=4.3 uM), without altering the activation or inactivation kinetics (depressant toxin). In Cyriopagopus hainanus (Chinese bird spider), this protein is Mu-theraphotoxin-Hhn2b 3.